The following is a 375-amino-acid chain: DNA replication and repair protein RecF (375 aa).

Position 30–37 (30–37 (GKNAQGKT)) interacts with ATP.

Belongs to the RecF family.

Its subcellular location is the cytoplasm. Functionally, the RecF protein is involved in DNA metabolism; it is required for DNA replication and normal SOS inducibility. RecF binds preferentially to single-stranded, linear DNA. It also seems to bind ATP. The chain is DNA replication and repair protein RecF from Lactobacillus acidophilus (strain ATCC 700396 / NCK56 / N2 / NCFM).